A 51-amino-acid polypeptide reads, in one-letter code: Photosystem I reaction center subunit IX (51 aa).

A helical membrane pass occupies residues 17–37; sequence FFSTAPVIALVFFTLTAGFLV.

It belongs to the PsaJ family.

It localises to the cellular thylakoid membrane. Functionally, may help in the organization of the PsaE and PsaF subunits. This Acaryochloris marina (strain MBIC 11017) protein is Photosystem I reaction center subunit IX.